The chain runs to 398 residues: Succinyl-diaminopimelate desuccinylase (398 aa).

His68 is a binding site for Zn(2+). Asp70 is a catalytic residue. Asp101 contributes to the Zn(2+) binding site. The active-site Proton acceptor is the Glu135. 3 residues coordinate Zn(2+): Glu136, Glu164, and His349.

Belongs to the peptidase M20A family. DapE subfamily. Homodimer. It depends on Zn(2+) as a cofactor. The cofactor is Co(2+).

The catalysed reaction is N-succinyl-(2S,6S)-2,6-diaminopimelate + H2O = (2S,6S)-2,6-diaminopimelate + succinate. It functions in the pathway amino-acid biosynthesis; L-lysine biosynthesis via DAP pathway; LL-2,6-diaminopimelate from (S)-tetrahydrodipicolinate (succinylase route): step 3/3. Catalyzes the hydrolysis of N-succinyl-L,L-diaminopimelic acid (SDAP), forming succinate and LL-2,6-diaminopimelate (DAP), an intermediate involved in the bacterial biosynthesis of lysine and meso-diaminopimelic acid, an essential component of bacterial cell walls. This Wolbachia pipientis wMel protein is Succinyl-diaminopimelate desuccinylase.